Reading from the N-terminus, the 89-residue chain is Putative regulatory protein CLH_1161 (89 aa).

Belongs to the RemA family.

This is Putative regulatory protein CLH_1161 from Clostridium botulinum (strain Alaska E43 / Type E3).